We begin with the raw amino-acid sequence, 419 residues long: Imidazolonepropionase (419 aa).

Fe(3+) is bound by residues H82 and H84. Zn(2+) is bound by residues H82 and H84. 4-imidazolone-5-propanoate is bound by residues R91, Y154, and H187. Y154 is a binding site for N-formimidoyl-L-glutamate. H252 is a Fe(3+) binding site. H252 provides a ligand contact to Zn(2+). A 4-imidazolone-5-propanoate-binding site is contributed by E255. D326 serves as a coordination point for Fe(3+). Residue D326 participates in Zn(2+) binding. Positions 328 and 330 each coordinate N-formimidoyl-L-glutamate. Residue S331 participates in 4-imidazolone-5-propanoate binding.

Belongs to the metallo-dependent hydrolases superfamily. HutI family. Zn(2+) serves as cofactor. The cofactor is Fe(3+).

The protein resides in the cytoplasm. It catalyses the reaction 4-imidazolone-5-propanoate + H2O = N-formimidoyl-L-glutamate. It functions in the pathway amino-acid degradation; L-histidine degradation into L-glutamate; N-formimidoyl-L-glutamate from L-histidine: step 3/3. Its function is as follows. Catalyzes the hydrolytic cleavage of the carbon-nitrogen bond in imidazolone-5-propanoate to yield N-formimidoyl-L-glutamate. It is the third step in the universal histidine degradation pathway. This Clostridium tetani (strain Massachusetts / E88) protein is Imidazolonepropionase.